The primary structure comprises 153 residues: General odorant-binding protein lush (153 aa).

Residues 1-29 (MKHWKRRSSAVFAIVLQVLVLLLPDPAVA) form the signal peptide. Cystine bridges form between Cys46–Cys79, Cys75–Cys132, and Cys121–Cys141. 1-propanol contacts are provided by Ser81 and Thr86. 2 residues coordinate butan-1-ol: Ser81 and Thr86. 2 residues coordinate ethanol: Ser81 and Thr86.

Belongs to the PBP/GOBP family. Specifically expressed in chemosensory system in both males and females. Expressed in a subset of trichoid chemosensory sensilla located on the ventral-lateral surface of the third antennal segment. Secreted from non-neuronal support cells into the sensillum lymph that bathes the olfactory neurons within these sensilla.

The protein resides in the secreted. In terms of biological role, odorant-binding protein required for olfactory behavior and for activity of pheromone-sensitive neurons. Binds to alcohols and mediates avoidance behavior to high concentrations of alcohols, the alcohol-binding possibly resulting in activation of receptors on T2B neurons, the activation of these receptors inhibiting these neurons. Acts in concert with Snmp and lush to capture cVA molecules on the surface of Or67d expressing olfactory dendrites and facilitate their transfer to the odorant-receptor Orco complex. Required for cVA response, probably by binding to VA. May act by serving as an adapter that bridges the presence of gaseous pheromone molecules, cVA, to activation of specific neuronal receptors expressed on T1 olfactory neurons, possibly via a specific conformational change induced by cVA that in turn activates T1 receptors. T1 neurons are excited by the pheromone VA, while T2 neurons are inhibited by alcohols. Also binds to phthalates. This chain is General odorant-binding protein lush (lush), found in Drosophila melanogaster (Fruit fly).